Here is a 184-residue protein sequence, read N- to C-terminus: Thiosulfate dehydrogenase [quinone] large subunit (184 aa).

The next 4 membrane-spanning stretches (helical) occupy residues 21–38 (LFPV…GGLR), 86–106 (FLTV…IGLL), 109–129 (LAAL…WLGS), and 137–157 (IGAL…GRVW).

Heterodimer of a large and a small subunit in a 2:2 stoichiometry. TQO may associate with the terminal oxidase formed by doxBCE.

It localises to the cell membrane. It carries out the reaction 6-decylubiquinone + 2 thiosulfate = 6-decylubiquinol + tetrathionate. Its activity is regulated as follows. Inhibited by sulfite, metabisulfite and dithonite. In terms of biological role, TQO plays a role in sulfur oxidation and is proposed to couple sulfur oxidation to dioxygen reduction; caldariellaquinone or sulfolobus quinone seem to serve to transfer electrons to the electron transport chain terminal oxidase formed by DoxBCE. The protein is Thiosulfate dehydrogenase [quinone] large subunit (doxD) of Acidianus ambivalens (Desulfurolobus ambivalens).